Reading from the N-terminus, the 905-residue chain is Protein translocase subunit SecA (905 aa).

Residues Gln87, 105-109 (GEGKT), and Asp512 each bind ATP. The disordered stretch occupies residues 836 to 905 (DVDAVDEQRK…KKYKHCHGKL (70 aa)). The segment covering 841–858 (DEQRKAADSAPREFRHEQ) has biased composition (basic and acidic residues). Zn(2+)-binding residues include Cys890, Cys892, Cys901, and His902. Positions 896–905 (KKYKHCHGKL) are enriched in basic residues.

Belongs to the SecA family. Monomer and homodimer. Part of the essential Sec protein translocation apparatus which comprises SecA, SecYEG and auxiliary proteins SecDF-YajC and YidC. The cofactor is Zn(2+).

It localises to the cell inner membrane. The protein localises to the cytoplasm. It carries out the reaction ATP + H2O + cellular proteinSide 1 = ADP + phosphate + cellular proteinSide 2.. Its function is as follows. Part of the Sec protein translocase complex. Interacts with the SecYEG preprotein conducting channel. Has a central role in coupling the hydrolysis of ATP to the transfer of proteins into and across the cell membrane, serving both as a receptor for the preprotein-SecB complex and as an ATP-driven molecular motor driving the stepwise translocation of polypeptide chains across the membrane. This Idiomarina loihiensis (strain ATCC BAA-735 / DSM 15497 / L2-TR) protein is Protein translocase subunit SecA.